The chain runs to 521 residues: C-22 sterol desaturase erg5 (521 aa).

A helical membrane pass occupies residues alanine 30 to isoleucine 50.

Belongs to the cytochrome P450 family. The cofactor is heme.

Its subcellular location is the endoplasmic reticulum membrane. The catalysed reaction is 5-dehydroepisterol + NADPH + O2 + H(+) = ergosta-5,7,22,24(28)-tetraen-3beta-ol + NADP(+) + 2 H2O. It participates in steroid metabolism; ergosterol biosynthesis. In terms of biological role, C-22 sterol desaturase; part of the third module of ergosterol biosynthesis pathway that includes the late steps of the pathway. Erg5 converts 5-dehydroepisterol into ergosta-5,7,22,24(28)-tetraen-3beta-ol by forming the C-22(23) double bond in the sterol side chain. The third module or late pathway involves the ergosterol synthesis itself through consecutive reactions that mainly occur in the endoplasmic reticulum (ER) membrane. Firstly, the squalene synthase erg9 catalyzes the condensation of 2 farnesyl pyrophosphate moieties to form squalene, which is the precursor of all steroids. Squalene synthase is crucial for balancing the incorporation of farnesyl diphosphate (FPP) into sterol and nonsterol isoprene synthesis. Secondly, squalene is converted into lanosterol by the consecutive action of the squalene epoxidase erg1 and the lanosterol synthase erg7. Then, the delta(24)-sterol C-methyltransferase erg6 methylates lanosterol at C-24 to produce eburicol. Eburicol is the substrate of the sterol 14-alpha demethylase encoded by cyp51A and cyp51B, to yield 4,4,24-trimethyl ergosta-8,14,24(28)-trienol. The C-14 reductase erg24 then reduces the C14=C15 double bond which leads to 4,4-dimethylfecosterol. A sequence of further demethylations at C-4, involving the C-4 demethylation complex containing the C-4 methylsterol oxidases erg25A or erg25B, the sterol-4-alpha-carboxylate 3-dehydrogenase erg26 and the 3-keto-steroid reductase erg27, leads to the production of fecosterol via 4-methylfecosterol. The C-8 sterol isomerase erg2 then catalyzes the reaction which results in unsaturation at C-7 in the B ring of sterols and thus converts fecosterol to episterol. The sterol-C5-desaturase erg3B then catalyzes the introduction of a C-5 double bond in the B ring to produce 5-dehydroepisterol. The 2 other sterol-C5-desaturases, erg3A and erg3C, seem to be less important in ergosterol biosynthesis. The C-22 sterol desaturase erg5 further converts 5-dehydroepisterol into ergosta-5,7,22,24(28)-tetraen-3beta-ol by forming the C-22(23) double bond in the sterol side chain. Finally, ergosta-5,7,22,24(28)-tetraen-3beta-ol is substrate of the C-24(28) sterol reductases erg4A and erg4B to produce ergosterol. Possible alternative sterol biosynthetic pathways might exist from fecosterol to ergosterol, depending on the activities of the erg3 isoforms. This chain is C-22 sterol desaturase erg5, found in Aspergillus fumigatus (strain ATCC MYA-4609 / CBS 101355 / FGSC A1100 / Af293) (Neosartorya fumigata).